A 1692-amino-acid chain; its full sequence is Flagellar attachment zone protein 1 (1692 aa).

Coiled-coil stretches lie at residues 613 to 657, 684 to 864, and 903 to 1607; these read REQE…KLQK, VTLD…HKVR, and NDHM…SALE. A run of 37 repeats spans residues 1012-1025, 1026-1039, 1040-1053, 1054-1067, 1068-1081, 1082-1095, 1096-1109, 1110-1123, 1124-1137, 1138-1151, 1152-1165, 1166-1179, 1180-1193, 1194-1207, 1208-1221, 1222-1235, 1236-1249, 1250-1263, 1264-1277, 1278-1291, 1292-1305, 1306-1319, 1320-1333, 1334-1347, 1348-1361, 1362-1375, 1376-1389, 1390-1403, 1404-1417, 1418-1431, 1432-1445, 1446-1459, 1460-1473, 1474-1487, 1488-1501, 1502-1515, and 1516-1529. The 37 X 14 AA tandem repeats of E-E-L-E-L-K-[VA]-A-E-N-E-K-L-A stretch occupies residues 1012-1529; the sequence is EELELKAAEN…LKVAENKRLA (518 aa).

The protein resides in the cell projection. It is found in the cilium. It localises to the flagellum. Its function is as follows. A component of FAZ filament that is required for correct FAZ assembly and attachment. Not essential for new flagellum growth. The polypeptide is Flagellar attachment zone protein 1 (Trypanosoma brucei brucei (strain 927/4 GUTat10.1)).